The primary structure comprises 1424 residues: S-layer protein A (1424 aa).

Positions 1 to 24 are cleaved as a signal peptide; that stretch reads MNKLVGLLVSSLFLASILIGIAPA. Asparagine 60, asparagine 70, asparagine 276, asparagine 295, asparagine 342, asparagine 358, asparagine 377, asparagine 468, asparagine 517, asparagine 545, asparagine 559, asparagine 581, asparagine 633, asparagine 714, asparagine 875, asparagine 914, asparagine 955, asparagine 989, asparagine 1018, asparagine 1042, asparagine 1093, asparagine 1134, asparagine 1197, asparagine 1217, asparagine 1252, asparagine 1276, asparagine 1304, and asparagine 1419 each carry an N-linked (GlcNAc...) asparagine glycan.

The protein belongs to the Sulfolobales SlaA family. As to quaternary structure, the mushroom-shaped unit cells of the Sulfolobales' S-layers may consist of three SlaB subunits and six SlaA subunits. In terms of processing, glycosylated. C-terminal glycosylation sites are modified with a heterogeneous family of glycans, with the largest having a composition Glc(1)Man(2)GlcNAc(2) plus 6-sulfoquinovose (QuiS).

It is found in the secreted. The protein localises to the cell wall. It localises to the S-layer. Its function is as follows. S-layer large protein. May form the highly ordered outer sheath. The polypeptide is S-layer protein A (Sulfolobus acidocaldarius (strain ATCC 33909 / DSM 639 / JCM 8929 / NBRC 15157 / NCIMB 11770)).